A 450-amino-acid chain; its full sequence is Bifunctional apoptosis regulator (450 aa).

Positions 1 to 24 (MEEPQKNDLSMRGQEEDHPVRSSG) are disordered. Over 1–140 (MEEPQKNDLS…PSTGRVNQQR (140 aa)) the chain is Cytoplasmic. The RING-type zinc-finger motif lies at 34 to 74 (CHCCYDTLVNPTTLNCGHSFCRHCLALWWMSSKKTECPECR). Residues 141–161 (GGGFFSGVLTALTGVAVILLV) form a helical membrane-spanning segment. Over 162-331 (YHWRSRESEH…REPTWKQWRE (170 aa)) the chain is Extracellular. An SAM domain is found at 182 to 249 (WTTEEVVLWL…LMELERVRAL (68 aa)). N-linked (GlcNAc...) asparagine glycosylation is present at Asn232. Residues 332-352 (FLIKYSFLPYQLIAEFAWDWL) traverse the membrane as a helical segment. Over 353-360 (EVHYWTSR) the chain is Cytoplasmic. A helical transmembrane segment spans residues 361–381 (FLIVNAMLLSVLELFSFWRIW). At 382 to 404 (SRSELKTVPQRMWSHFWKVSTQG) the chain is on the extracellular side. The chain crosses the membrane as a helical span at residues 405–425 (LFMAMFWPLIPQFVCNCLFYW). The Cytoplasmic segment spans residues 426 to 450 (ALYFNPIINIDLVVKEIRRLETQVF).

In terms of assembly, interacts with CASP8, BCL2 and BCL2L1 through SAM domain and also with HIP1, IFT57, ESRRBL1 and BCAP31. Interacts with NGFR; this interaction inhibits NF-kappa-B and JNK-related signaling pathways. Post-translationally, mediates RING-dependent self-ubiquitination leading to proteasomal degradation.

It is found in the endoplasmic reticulum membrane. It catalyses the reaction S-ubiquitinyl-[E2 ubiquitin-conjugating enzyme]-L-cysteine + [acceptor protein]-L-lysine = [E2 ubiquitin-conjugating enzyme]-L-cysteine + N(6)-ubiquitinyl-[acceptor protein]-L-lysine.. Membrane-bound E3 ubiquitin ligase that plays a role in several processes including apoptosis regulation or reticulum endoplasmic stress. Has anti-apoptotic activity, both for apoptosis triggered via death-receptors and via mitochondrial factors. Contributes to the dynamic control of IRE1/ERN1 signaling during ER stress by inducing BAX inhibitor 1/TMBIM6 proteasomal degradation. Promotes the activation of TGF-beta signaling by mediating the 'Lys-63'-linked ubiquitination of TGFBR1 which is critical to activate the pathway. Together with NGFR, negatively regulates NF-kappa-B and JNK-related signaling pathways. Promotes the proteasome-mediated degradation of PNPLA3, a protein involveld in lipid metabolism. The protein is Bifunctional apoptosis regulator (Bfar) of Rattus norvegicus (Rat).